Reading from the N-terminus, the 406-residue chain is Putative F-box protein At5g38270 (406 aa).

The region spanning 20–67 is the F-box domain; sequence HDWSKLCPDILRSILESLSSTDFHRAKTVCSDWYSNWKTCVKPLCPWR.

This chain is Putative F-box protein At5g38270, found in Arabidopsis thaliana (Mouse-ear cress).